The following is a 436-amino-acid chain: GTPase Der (436 aa).

2 consecutive EngA-type G domains span residues 4–167 and 176–351; these read PVVA…PKVE and IRFC…ESHN. Residues 10–17, 57–61, 119–122, 182–189, 229–233, and 294–297 contribute to the GTP site; these read GRPNVGKS, DTGGI, NKVD, DTAGM, and NKWD. In terms of domain architecture, KH-like spans 352–436; that stretch reads IRVQTNVLND…PIRIIARARD (85 aa).

It belongs to the TRAFAC class TrmE-Era-EngA-EngB-Septin-like GTPase superfamily. EngA (Der) GTPase family. Associates with the 50S ribosomal subunit.

In terms of biological role, GTPase that plays an essential role in the late steps of ribosome biogenesis. The chain is GTPase Der from Bacillus cytotoxicus (strain DSM 22905 / CIP 110041 / 391-98 / NVH 391-98).